A 264-amino-acid chain; its full sequence is Protein OXIDATIVE STRESS 3 LIKE 1 (264 aa).

Disordered stretches follow at residues 1–76 and 178–225; these read MDCV…GPLE and TGEG…QGSF. Positions 29 to 43 are enriched in low complexity; sequence PSDSSSSPSSSASSS. Residues 47 to 56 show a composition bias toward basic and acidic residues; that stretch reads NSDDGEKSSE. Residues 57–67 are compositionally biased toward acidic residues; it reads DGGDDAGENEV. Over residues 179-201 the composition is skewed to low complexity; it reads GEGSSSGGDSSPGSSPTTSGSPP. Basic residues predominate over residues 203-212; sequence QLHHHQHQMK.

It is found in the nucleus. In terms of biological role, promotes slightly the tolerance to zinc (Zn) and to oxidizing chemicals (e.g. diamide). In Arabidopsis thaliana (Mouse-ear cress), this protein is Protein OXIDATIVE STRESS 3 LIKE 1.